Here is a 752-residue protein sequence, read N- to C-terminus: Complement C2 (752 aa).

Residues 1-20 form the signal peptide; sequence MGPLMVLFCLLFLYPGLADS. Sushi domains are found at residues 22–86, 87–146, and 149–206; these read PSCP…VCKP, VRCP…VCDN, and GHCP…ICRQ. 6 disulfide bridges follow: Cys24–Cys64, Cys51–Cys84, Cys89–Cys131, Cys117–Cys144, Cys151–Cys191, and Cys177–Cys204. The N-linked (GlcNAc...) asparagine glycan is linked to Asn29. Asn112 is a glycosylation site (N-linked (GlcNAc...) asparagine). The 199-residue stretch at 254 to 452 folds into the VWFA domain; that stretch reads NLYLLLDCSQ…KALHQVFEHM (199 aa). The MIDAS-like motif motif lies at 260–264; it reads DCSQS. Positions 262 and 264 each coordinate Mg(2+). N-linked (GlcNAc...) asparagine glycosylation is found at Asn290 and Asn333. Residue Thr337 participates in Mg(2+) binding. Disulfide bonds link Cys463–Cys581, Cys492–Cys508, and Cys584–Cys600. The Peptidase S1 domain maps to 464–744; sequence GVGNMSANAS…MQPWLRQHLG (281 aa). 2 N-linked (GlcNAc...) asparagine glycosylation sites follow: Asn467 and Asn471. Catalysis depends on charge relay system residues His507 and Asp561. Residues Asn621 and Asn651 are each glycosylated (N-linked (GlcNAc...) asparagine). Disulfide bonds link Cys638-Cys665 and Cys675-Cys705. Residue Ser679 is the Charge relay system of the active site.

Belongs to the peptidase S1 family. In terms of assembly, serine protease component of the C3 convertase, also named C4bC2b, composed of the serine protease complement C2b and complement C4b. Serine protease component of the C5 convertase, also named C4bC2bC3b, composed of the serine protease complement C2b, complement C3b, as well as complement C4b. Mg(2+) serves as cofactor. It depends on Mn(2+) as a cofactor. In terms of processing, cleaved and activated by different proteases depending on the complement pathway to generate complement C2a and serine protease complement C2b chains. Cleaved and activated by C1S following activation by the classical complement system. Cleaved and activated by MASP2 following activation by the lectin complement system. Cleaved and activated by GZMK following activation by the GZMK complement system.

It is found in the secreted. The protein localises to the cell surface. The enzyme catalyses Selective cleavage of Arg-|-Ser bond in complement component C3 alpha-chain to form C3a and C3b, and Arg-|-Xaa bond in complement component C5 alpha-chain to form C5a and C5b.. Its function is as follows. Precursor of the catalytic component of the C3 and C5 convertase complexes, which are part of the complement pathway, a cascade of proteins that leads to phagocytosis and breakdown of pathogens and signaling that strengthens the adaptive immune system. Component C2 is part of the classical, lectin and GZMK complement systems. In terms of biological role, catalytic component of the complement C3 and C5 convertase complexes. Following complement activation, recruited to the surface of pathogens by complement C4b opsonin to form the C3 convertase, or C3b and C4b opsonins to form the C5 convertase. As part of the C3 convertase, cleaves and activate C3 into C3a anaphylatoxin and C3b opsonin, the next components of the complement pathways. As part of the C5 convertase, cleaves and activate C5 into C5a anaphylatoxin and C5b component of the membrane attack complex. The sequence is that of Complement C2 from Pan troglodytes (Chimpanzee).